Here is a 289-residue protein sequence, read N- to C-terminus: Glycerol facilitator-aquaporin gla (289 aa).

The next 2 helical transmembrane spans lie at 10 to 30 and 41 to 61; these read ITEF…VANV and SWMI…VAFG. An NPA 1 motif is present at residues 68 to 70; the sequence is NPA. A run of 3 helical transmembrane segments spans residues 87 to 107, 151 to 171, and 209 to 229; these read AQYI…IVMV, FLGS…FFGS, and MIAH…LGGP. An NPA 2 motif is present at residues 235–237; the sequence is NPA. The helical transmembrane segment at 264–284 threads the bilayer; it reads WYAWVPVLAPILASLAAVALF.

The protein belongs to the MIP/aquaporin (TC 1.A.8) family.

It is found in the cell membrane. Mixed channel protein that transports both water and glycerol. The polypeptide is Glycerol facilitator-aquaporin gla (gla) (Lactococcus lactis subsp. cremoris (Streptococcus cremoris)).